The sequence spans 104 residues: Transcription elongation factor A protein-like 9 (104 aa).

Positions 1-27 (MKSCQKMEGKPENESEPKHEEEPKPEE) are enriched in basic and acidic residues. Residues 1–44 (MKSCQKMEGKPENESEPKHEEEPKPEEKPEEEEKLEEEAKAKGT) are disordered.

The protein belongs to the TFS-II family. TFA subfamily.

Its subcellular location is the nucleus. Functionally, may be involved in transcriptional regulation. The chain is Transcription elongation factor A protein-like 9 from Homo sapiens (Human).